The chain runs to 416 residues: Probable F-box protein At5g47300 (416 aa).

Residues 40–86 enclose the F-box domain; that stretch reads TLMLSDLPGDLLEEILCRVPATSLKQLRSTCKQWNNLFNNGRFTRKH.

The polypeptide is Probable F-box protein At5g47300 (Arabidopsis thaliana (Mouse-ear cress)).